A 361-amino-acid polypeptide reads, in one-letter code: DNA replication and repair protein RecF (361 aa).

30-37 (GPNGSGKT) provides a ligand contact to ATP.

It belongs to the RecF family.

Its subcellular location is the cytoplasm. Its function is as follows. The RecF protein is involved in DNA metabolism; it is required for DNA replication and normal SOS inducibility. RecF binds preferentially to single-stranded, linear DNA. It also seems to bind ATP. The polypeptide is DNA replication and repair protein RecF (Yersinia enterocolitica serotype O:8 / biotype 1B (strain NCTC 13174 / 8081)).